The chain runs to 381 residues: Putative acetyl-CoA C-acetyltransferase VraB (381 aa).

Residue cysteine 86 is the Acyl-thioester intermediate of the active site. Histidine 338 acts as the Proton acceptor in catalysis.

Belongs to the thiolase-like superfamily. Thiolase family.

This is Putative acetyl-CoA C-acetyltransferase VraB (vraB) from Staphylococcus haemolyticus (strain JCSC1435).